Consider the following 587-residue polypeptide: Putative phagocytic receptor 1b (587 aa).

The signal sequence occupies residues 1–23 (MRLQILLIYLICIIVSSIVLVES). Helical transmembrane passes span 223 to 243 (LSVM…AIMI), 294 to 314 (IGWQ…FGMF), 319 to 339 (GGNM…ISGY), 354 to 374 (AWNI…VVIL), 390 to 410 (ILTM…LTVV), 448 to 468 (ILIA…YIFN), 480 to 500 (GILC…TVAL), 524 to 544 (VVFI…MYGL), and 556 to 576 (IVCF…SLIF).

Belongs to the nonaspanin (TM9SF) (TC 9.A.2) family.

Its subcellular location is the membrane. Functionally, involved in adhesion and phagocytosis of hydrophilic particles. This Dictyostelium discoideum (Social amoeba) protein is Putative phagocytic receptor 1b (phg1b).